A 95-amino-acid chain; its full sequence is Protein TusB (95 aa).

It belongs to the DsrH/TusB family. In terms of assembly, heterohexamer, formed by a dimer of trimers. The hexameric TusBCD complex contains 2 copies each of TusB, TusC and TusD. The TusBCD complex interacts with TusE.

The protein resides in the cytoplasm. Functionally, part of a sulfur-relay system required for 2-thiolation of 5-methylaminomethyl-2-thiouridine (mnm(5)s(2)U) at tRNA wobble positions. This chain is Protein TusB, found in Klebsiella pneumoniae subsp. pneumoniae (strain ATCC 700721 / MGH 78578).